A 110-amino-acid chain; its full sequence is Minor capsid protein VP2 (110 aa).

This sequence belongs to the vesivirus VP2 protein family. Homooligomer. The portal-like structure consists in 12 copies of VP2. Interacts with capsid protein VP1.

It is found in the virion. The protein localises to the host cytoplasm. Minor structural protein that forms a portal-like structure at a unique three-fold axis of symmetry, following binding to the host receptor. The channel formed by VP2 may allow the delivery of the viral genome through the host endosomal membrane. The polypeptide is Minor capsid protein VP2 (Otariidae (fur seals &amp; sea lions)).